The following is a 310-amino-acid chain: Protein translocase subunit SecF (310 aa).

A run of 6 helical transmembrane segments spans residues 20–42, 140–160, 164–184, 194–214, 246–266, and 272–292; these read FKKV…IGIY, IEAG…YIWV, WYFG…ALGF, LSTI…SVVI, ILTV…GGEA, and VLVF…SAPI.

Belongs to the SecD/SecF family. SecF subfamily. In terms of assembly, forms a complex with SecD. Part of the essential Sec protein translocation apparatus which comprises SecA, SecYEG and auxiliary proteins SecDF-YajC and YidC.

It localises to the cell inner membrane. Functionally, part of the Sec protein translocase complex. Interacts with the SecYEG preprotein conducting channel. SecDF uses the proton motive force (PMF) to complete protein translocation after the ATP-dependent function of SecA. This is Protein translocase subunit SecF from Rickettsia canadensis (strain McKiel).